We begin with the raw amino-acid sequence, 399 residues long: Exodeoxyribonuclease 7 large subunit (399 aa).

The protein belongs to the XseA family. Heterooligomer composed of large and small subunits.

The protein localises to the cytoplasm. The enzyme catalyses Exonucleolytic cleavage in either 5'- to 3'- or 3'- to 5'-direction to yield nucleoside 5'-phosphates.. Bidirectionally degrades single-stranded DNA into large acid-insoluble oligonucleotides, which are then degraded further into small acid-soluble oligonucleotides. This is Exodeoxyribonuclease 7 large subunit from Clostridium acetobutylicum (strain ATCC 824 / DSM 792 / JCM 1419 / IAM 19013 / LMG 5710 / NBRC 13948 / NRRL B-527 / VKM B-1787 / 2291 / W).